We begin with the raw amino-acid sequence, 211 residues long: Ribosomal RNA large subunit methyltransferase E (211 aa).

Positions 55, 57, 75, 93, and 117 each coordinate S-adenosyl-L-methionine. Lys-157 (proton acceptor) is an active-site residue.

The protein belongs to the class I-like SAM-binding methyltransferase superfamily. RNA methyltransferase RlmE family.

It localises to the cytoplasm. It catalyses the reaction uridine(2552) in 23S rRNA + S-adenosyl-L-methionine = 2'-O-methyluridine(2552) in 23S rRNA + S-adenosyl-L-homocysteine + H(+). In terms of biological role, specifically methylates the uridine in position 2552 of 23S rRNA at the 2'-O position of the ribose in the fully assembled 50S ribosomal subunit. This chain is Ribosomal RNA large subunit methyltransferase E, found in Methanothermobacter thermautotrophicus (strain ATCC 29096 / DSM 1053 / JCM 10044 / NBRC 100330 / Delta H) (Methanobacterium thermoautotrophicum).